The chain runs to 212 residues: MAQRKTNGSKLFMMVLYMVAACSAIPISDLLDRASQRSDTLHSLSTTLTQDLDSHFPPMGRVITPRPSMCHTSSLHTPIDKEQALQVSEADLLSLVRSLLQAWRDPLVILSTSANTLPHPAQNSISTKVQELLEHTKSLGDGLDILSGKFGPAAQSISSLPYRGGNDISQDRISRLTNFHFLMSCFRRDSHKIDSFLKVLRCRAAKLQPEMC.

A signal peptide spans 1–24; it reads MAQRKTNGSKLFMMVLYMVAACSA. 2 disulfide bridges follow: C70-C185 and C202-C212.

The protein belongs to the somatotropin/prolactin family. In terms of tissue distribution, pituitary gland.

The protein localises to the secreted. In Dicentrarchus labrax (European seabass), this protein is Prolactin (prl).